Reading from the N-terminus, the 331-residue chain is Peroxidase 49 (331 aa).

Positions 1 to 22 are cleaved as a signal peptide; the sequence is MARLTSFLLLLSLICFVPLCLC. Disulfide bonds link Cys-39/Cys-119, Cys-72/Cys-77, Cys-125/Cys-326, and Cys-204/Cys-236. The Proton acceptor role is filled by His-70. 5 residues coordinate Ca(2+): Asp-71, Val-74, Gly-76, Asp-78, and Ser-80. Pro-167 serves as a coordination point for substrate. The N-linked (GlcNAc...) asparagine glycan is linked to Asn-170. Residue His-197 participates in heme b binding. Residue Thr-198 coordinates Ca(2+). N-linked (GlcNAc...) asparagine glycosylation occurs at Asn-213. Ca(2+)-binding residues include Asp-249, Ser-252, and Asp-257.

This sequence belongs to the peroxidase family. Classical plant (class III) peroxidase subfamily. The cofactor is heme b. Requires Ca(2+) as cofactor.

Its subcellular location is the secreted. The catalysed reaction is 2 a phenolic donor + H2O2 = 2 a phenolic radical donor + 2 H2O. Functionally, removal of H(2)O(2), oxidation of toxic reductants, biosynthesis and degradation of lignin, suberization, auxin catabolism, response to environmental stresses such as wounding, pathogen attack and oxidative stress. These functions might be dependent on each isozyme/isoform in each plant tissue. The chain is Peroxidase 49 (PER49) from Arabidopsis thaliana (Mouse-ear cress).